Consider the following 378-residue polypeptide: UPF0754 membrane protein Exig_0680 (378 aa).

The next 2 membrane-spanning stretches (helical) occupy residues 5–25 (VDLVIKMIGMIVIGALIGAVT) and 357–377 (ITWLGGLLGGLIGMIQAILLI).

Belongs to the UPF0754 family.

The protein localises to the cell membrane. The chain is UPF0754 membrane protein Exig_0680 from Exiguobacterium sibiricum (strain DSM 17290 / CCUG 55495 / CIP 109462 / JCM 13490 / 255-15).